A 461-amino-acid polypeptide reads, in one-letter code: Bifunctional protein HldE (461 aa).

The interval 1-312 (MLEFLSQQKP…IKSFNRVDFE (312 aa)) is ribokinase. 191 to 194 (NKKE) contributes to the ATP binding site. The active site involves aspartate 259. Residues 334-461 (FTNGCFDIVH…KIIEKIKDKK (128 aa)) form a cytidylyltransferase region.

The protein in the N-terminal section; belongs to the carbohydrate kinase PfkB family. This sequence in the C-terminal section; belongs to the cytidylyltransferase family. As to quaternary structure, homodimer.

The catalysed reaction is D-glycero-beta-D-manno-heptose 7-phosphate + ATP = D-glycero-beta-D-manno-heptose 1,7-bisphosphate + ADP + H(+). It catalyses the reaction D-glycero-beta-D-manno-heptose 1-phosphate + ATP + H(+) = ADP-D-glycero-beta-D-manno-heptose + diphosphate. The protein operates within nucleotide-sugar biosynthesis; ADP-L-glycero-beta-D-manno-heptose biosynthesis; ADP-L-glycero-beta-D-manno-heptose from D-glycero-beta-D-manno-heptose 7-phosphate: step 1/4. Its pathway is nucleotide-sugar biosynthesis; ADP-L-glycero-beta-D-manno-heptose biosynthesis; ADP-L-glycero-beta-D-manno-heptose from D-glycero-beta-D-manno-heptose 7-phosphate: step 3/4. Catalyzes the phosphorylation of D-glycero-D-manno-heptose 7-phosphate at the C-1 position to selectively form D-glycero-beta-D-manno-heptose-1,7-bisphosphate. In terms of biological role, catalyzes the ADP transfer from ATP to D-glycero-beta-D-manno-heptose 1-phosphate, yielding ADP-D-glycero-beta-D-manno-heptose. The protein is Bifunctional protein HldE of Campylobacter jejuni subsp. doylei (strain ATCC BAA-1458 / RM4099 / 269.97).